A 472-amino-acid polypeptide reads, in one-letter code: Membrane-bound acylglycerophosphatidylinositol O-acyltransferase MBOAT7 (472 aa).

The Cytoplasmic portion of the chain corresponds to 1-5 (MSPEE). The chain crosses the membrane as a helical span at residues 6–22 (WTYLVVLLISIPIGFLF). Residues 23-33 (KKAGPGLKRWG) are Lumenal-facing. A helical membrane pass occupies residues 34–57 (AAAVGLGLTLFTCGPHTLHSLVTI). Topologically, residues 58–73 (LGTWALIQAQPCSCHA) are cytoplasmic. A helical transmembrane segment spans residues 74-93 (LALAWTFSYLLFFRALSLLG). Topologically, residues 94 to 194 (LPTPTPFTNA…VPSLRPLLRR (101 aa)) are lumenal. The helical transmembrane segment at 195–212 (AWPAPLFGLLFLLSSHLF) threads the bilayer. The Cytoplasmic portion of the chain corresponds to 213-231 (PLEAVREDAFYARPLPARL). The chain crosses the membrane as a helical span at residues 232-261 (FYMIPVFFAFRMRFYVAWIAAECGCIAAGF). At 262 to 426 (GAYPVAAKAR…LSLADTLRYW (165 aa)) the chain is on the lumenal side. Asn-321 is a glycosylation site (N-linked (GlcNAc...) asparagine). Residues 427–447 (ASIYFCIHFLALAALGLGLAL) form a helical membrane-spanning segment. Over 448 to 472 (GGGSPSRRKAASQPTSLAPEKLREE) the chain is Cytoplasmic. The disordered stretch occupies residues 453–472 (SRRKAASQPTSLAPEKLREE).

The protein belongs to the membrane-bound acyltransferase family. In terms of assembly, interacts with SPTSSA; the interaction facilitates MBOAT7 location to mitochondria-associated membranes (MAMs). Overexpressed in metastatic breast and bladder carcinomas relative to normal breast epithelium and urothelium.

It localises to the endoplasmic reticulum membrane. The enzyme catalyses a 1-acyl-sn-glycero-3-phospho-(1D-myo-inositol) + (5Z,8Z,11Z,14Z)-eicosatetraenoyl-CoA = a 1-acyl-2-(5Z,8Z,11Z,14Z-eicosatetraenoyl)-sn-glycero-3-phospho-(1D-myo-inositol) + CoA. It catalyses the reaction (5Z,8Z,11Z,14Z)-eicosatetraenoyl-CoA + 1-hexadecanoyl-sn-glycero-3-phosphocholine = 1-hexadecanoyl-2-(5Z,8Z,11Z,14Z-eicosatetraenoyl)-sn-glycero-3-phosphocholine + CoA. It carries out the reaction a 1-acyl-sn-glycero-3-phospho-(1D-myo-inositol) + an acyl-CoA = a 1,2-diacyl-sn-glycero-3-phospho-(1D-myo-inositol) + CoA. The catalysed reaction is 1-octadecanoyl-sn-glycero-3-phospho-(1D-myo-inositol) + (5Z,8Z,11Z,14Z)-eicosatetraenoyl-CoA = 1-octadecanoyl-2-(5Z,8Z,11Z,14Z-eicosatetraenoyl)-sn-glycero-3-phospho-(1D-myo-inositol) + CoA. It functions in the pathway lipid metabolism; phospholipid metabolism. With respect to regulation, activity is inhibited by thimerosal. Acyltransferase which catalyzes the transfer of an acyl group from an acyl-CoA to a lysophosphatidylinositol (1-acylglycerophosphatidylinositol or LPI) leading to the production of a phosphatidylinositol (1,2-diacyl-sn-glycero-3-phosphoinositol or PI) and participates in the reacylation step of the phospholipid remodeling pathway also known as the Lands cycle. Prefers arachidonoyl-CoA as the acyl donor, thus contributing to the regulation of free levels arachidonic acid in cell. In liver, participates in the regulation of triglyceride metabolism through the phosphatidylinositol acyl-chain remodeling regulation. The sequence is that of Membrane-bound acylglycerophosphatidylinositol O-acyltransferase MBOAT7 from Homo sapiens (Human).